The chain runs to 560 residues: Factor VII-activating protease (560 aa).

The first 23 residues, 1–23 (MFARMSDLHVLLLMALVGKTACG), serve as a signal peptide directing secretion. N-linked (GlcNAc...) asparagine glycosylation is present at Asn54. EGF-like domains follow at residues 73–109 (QADP…NKCQ), 111–148 (VQNT…PSCS), and 150–188 (VVPV…KFCE). 18 disulfide bridges follow: Cys77-Cys88, Cys82-Cys97, Cys99-Cys108, Cys115-Cys125, Cys120-Cys136, Cys138-Cys147, Cys154-Cys165, Cys159-Cys176, Cys178-Cys187, Cys194-Cys276, Cys215-Cys257, Cys246-Cys271, Cys301-Cys435, Cys347-Cys363, Cys355-Cys424, Cys447-Cys515, Cys477-Cys493, and Cys505-Cys533. Residues 193-276 (DCYVGDGYSY…KWEYCDVSAC (84 aa)) enclose the Kringle domain. Residue Asn207 is glycosylated (N-linked (GlcNAc...) asparagine). Residues 314–555 (IYGGFKSTAG…FLNWIKATIK (242 aa)) enclose the Peptidase S1 domain. Residues His362 and Asp411 each act as charge relay system in the active site. Ser509 (charge relay system) is an active-site residue.

It belongs to the peptidase S1 family. As to quaternary structure, heterodimer; disulfide-linked. Heterodimer of a 50 kDa heavy and a 27 kDa light chain linked by a disulfide bond. Proteolytic cleavage at Gly-23 or Met-27 can give rise to the 50 kDa heavy chain (HC) and cleavage at Arg-313 or Lys-319 can give rise to the 27 kDa light chain (LC). The HC can undergo further proteolytic cleavage giving rise to a 26 kDa fragment. The LC can undergo further proteolytic cleavage at Arg-313 leading to a 17-kDa fragment and at Arg-480 leading to a 8-kDa fragment. In terms of tissue distribution, ubiquitously expressed.

Its subcellular location is the secreted. In terms of biological role, cleaves the alpha-chain at multiple sites and the beta-chain between 'Lys-53' and 'Lys-54' but not the gamma-chain of fibrinogen and therefore does not initiate the formation of the fibrin clot and does not cause the fibrinolysis directly. It does not cleave (activate) prothrombin and plasminogen but converts the inactive single chain urinary plasminogen activator (pro-urokinase) to the active two chain form. Activates coagulation factor VII. May function as a tumor suppressor negatively regulating cell proliferation and cell migration. The sequence is that of Factor VII-activating protease from Homo sapiens (Human).